The sequence spans 325 residues: GMP reductase (325 aa).

Catalysis depends on cysteine 173, which acts as the Thioimidate intermediate. 202 to 225 serves as a coordination point for NADP(+); sequence IIADGGIRDHGDIAKSVRFGASMV.

Belongs to the IMPDH/GMPR family. GuaC type 2 subfamily.

It carries out the reaction IMP + NH4(+) + NADP(+) = GMP + NADPH + 2 H(+). Its function is as follows. Catalyzes the irreversible NADPH-dependent deamination of GMP to IMP. It functions in the conversion of nucleobase, nucleoside and nucleotide derivatives of G to A nucleotides, and in maintaining the intracellular balance of A and G nucleotides. This chain is GMP reductase, found in Variovorax paradoxus (strain S110).